Here is a 55-residue protein sequence, read N- to C-terminus: Large ribosomal subunit protein bL33 (55 aa).

The protein belongs to the bacterial ribosomal protein bL33 family.

This Phenylobacterium zucineum (strain HLK1) protein is Large ribosomal subunit protein bL33.